Reading from the N-terminus, the 84-residue chain is Putative membrane protein insertion efficiency factor (84 aa).

Residues 63–84 are disordered; sequence WGGSGYDPVPGADPEHDRRPRG. A compositionally biased stretch (basic and acidic residues) spans 75–84; sequence DPEHDRRPRG.

This sequence belongs to the UPF0161 family.

The protein resides in the cell inner membrane. In terms of biological role, could be involved in insertion of integral membrane proteins into the membrane. This chain is Putative membrane protein insertion efficiency factor, found in Cereibacter sphaeroides (strain ATCC 17029 / ATH 2.4.9) (Rhodobacter sphaeroides).